The chain runs to 426 residues: MLDPKLFRTQLPEIAAKLAKRGFTLDVERIQQLEDTRKVVQVECENLQQERNTRSKSIGKAKAAGEDIAPLLKEVDNLKSALSEAEQKLGAVQAELDEIIAGVPNVLADEVPEGKNEDDNVEVSQWGTPREFDFEVKDHVDVGAGLKGLDFETAGKITGSRFAVMTGAVARLHRALIQFMLNTHTGEHGYDEIYVPYIVNKDSLYGTGQLPKFEEDLFKLRDDRDFYLIPTAEVPVTNMMRDEIIDEKQLPVRFACHTPCFRSEAGSYGRDTRGMIRQHQFEKVELVQFVKPGESMAALESLVGHAETILQKLSLPYRKVILCGGDTGFSSTKTYDLEVWLPSQNTYREISSCSNFGDFQARRMKARYRNAETGKPELLHTLNGSGLAIGRTLVAILENYQQADGSLAIPEVLQPFMNGQTSISAP.

231-233 is a binding site for L-serine; sequence TAE. An ATP-binding site is contributed by 262–264; it reads RSE. L-serine is bound at residue glutamate 285. An ATP-binding site is contributed by 349-352; the sequence is EISS. Position 385 (serine 385) interacts with L-serine.

It belongs to the class-II aminoacyl-tRNA synthetase family. Type-1 seryl-tRNA synthetase subfamily. As to quaternary structure, homodimer. The tRNA molecule binds across the dimer.

The protein resides in the cytoplasm. It catalyses the reaction tRNA(Ser) + L-serine + ATP = L-seryl-tRNA(Ser) + AMP + diphosphate + H(+). The enzyme catalyses tRNA(Sec) + L-serine + ATP = L-seryl-tRNA(Sec) + AMP + diphosphate + H(+). It participates in aminoacyl-tRNA biosynthesis; selenocysteinyl-tRNA(Sec) biosynthesis; L-seryl-tRNA(Sec) from L-serine and tRNA(Sec): step 1/1. Catalyzes the attachment of serine to tRNA(Ser). Is also able to aminoacylate tRNA(Sec) with serine, to form the misacylated tRNA L-seryl-tRNA(Sec), which will be further converted into selenocysteinyl-tRNA(Sec). The protein is Serine--tRNA ligase of Teredinibacter turnerae (strain ATCC 39867 / T7901).